We begin with the raw amino-acid sequence, 245 residues long: MSSLNVLGVIPARIGSTRLPRKVLREIAGEPMLAWVYRAARASGQLRQVLIATDAEEVMEFARQKGLPAIFTPEDCASGTDRVFVVAQSIDADIYVNIQGDEPMLTPAHFTALLAPFEQPHVQVTTLSVPCSEDEIANPNAVKVVTAADGRALYFSRATIPYDRDAAGFIGYRKHLGLYAYRKAALRRFATLPPSRLEEIERLEQLRLLENGIDIHVAEAPGSTIGVDTEEDLRAVEQLLLERKK.

This sequence belongs to the KdsB family.

The protein resides in the cytoplasm. It catalyses the reaction 3-deoxy-alpha-D-manno-oct-2-ulosonate + CTP = CMP-3-deoxy-beta-D-manno-octulosonate + diphosphate. Its pathway is nucleotide-sugar biosynthesis; CMP-3-deoxy-D-manno-octulosonate biosynthesis; CMP-3-deoxy-D-manno-octulosonate from 3-deoxy-D-manno-octulosonate and CTP: step 1/1. It participates in bacterial outer membrane biogenesis; lipopolysaccharide biosynthesis. Activates KDO (a required 8-carbon sugar) for incorporation into bacterial lipopolysaccharide in Gram-negative bacteria. In Acidobacterium capsulatum (strain ATCC 51196 / DSM 11244 / BCRC 80197 / JCM 7670 / NBRC 15755 / NCIMB 13165 / 161), this protein is 3-deoxy-manno-octulosonate cytidylyltransferase.